Here is a 281-residue protein sequence, read N- to C-terminus: NADPH-dependent 7-cyano-7-deazaguanine reductase (281 aa).

87-89 (IES) contributes to the substrate binding site. 89 to 90 (SK) serves as a coordination point for NADPH. The active-site Thioimide intermediate is the Cys188. Asp195 serves as the catalytic Proton donor. Substrate is bound at residue 227–228 (HE). 256 to 257 (RG) serves as a coordination point for NADPH. Residues 261–281 (INPYRSTEQDKPAHNHRMARQ) form a disordered region.

It belongs to the GTP cyclohydrolase I family. QueF type 2 subfamily. Homodimer.

It localises to the cytoplasm. It catalyses the reaction 7-aminomethyl-7-carbaguanine + 2 NADP(+) = 7-cyano-7-deazaguanine + 2 NADPH + 3 H(+). Its pathway is tRNA modification; tRNA-queuosine biosynthesis. Its function is as follows. Catalyzes the NADPH-dependent reduction of 7-cyano-7-deazaguanine (preQ0) to 7-aminomethyl-7-deazaguanine (preQ1). The polypeptide is NADPH-dependent 7-cyano-7-deazaguanine reductase (Vibrio parahaemolyticus serotype O3:K6 (strain RIMD 2210633)).